Consider the following 381-residue polypeptide: Zinc finger CCCH domain-containing protein 61 (381 aa).

The tract at residues 1–39 (MDVEHHKSGHISRPTVDIPPRKLLSSAKSPSSVSSPLRD) is disordered. The span at 21–37 (RKLLSSAKSPSSVSSPL) shows a compositional bias: low complexity. C3H1-type zinc fingers lie at residues 101 to 128 (YTGE…HGVF) and 137 to 159 (YRTE…AHSP).

In terms of assembly, interacts with MARD1/FLZ9 and RD21A via its CCCH zing finger domains.

It is found in the cytoplasm. The protein localises to the stress granule. The protein resides in the P-body. The polypeptide is Zinc finger CCCH domain-containing protein 61 (Arabidopsis thaliana (Mouse-ear cress)).